The sequence spans 209 residues: Thymidylate kinase (209 aa).

10–17 (GIDGCGKS) is a binding site for ATP.

This sequence belongs to the thymidylate kinase family.

The catalysed reaction is dTMP + ATP = dTDP + ADP. Its function is as follows. Phosphorylation of dTMP to form dTDP in both de novo and salvage pathways of dTTP synthesis. This chain is Thymidylate kinase, found in Parasynechococcus marenigrum (strain WH8102).